Consider the following 105-residue polypeptide: UPF0145 protein Ping_0381 (105 aa).

This sequence belongs to the UPF0145 family.

This is UPF0145 protein Ping_0381 from Psychromonas ingrahamii (strain DSM 17664 / CCUG 51855 / 37).